A 784-amino-acid chain; its full sequence is MPGVIPSESNGLSRGSPSKKNRLSLKFFQKKETKRALDFTDSQENEEKTSEYRGSEIDQVVPAAQSSPVSCEKRENLLPFVGLNNLGNTCYLNSILQVLYFCPGFKTGVKHLFNIISRKKEALKDDSNQKDKGSCKEESLASYELICSLQSLIISVEQLQASFLLNPEKYTDELATQPRRLLNTLRELNPMYEGFLQHDAQEVLQCILGNIQETCQLLKKEEIKNLAELSGKVEEQSLQKEETGGITSTEIDSMRNTEDVKEQLPKGNWKRKSDSESSNVKKKVKLSRESQPLEENQRQTRSKRKAIGDTLEAAPKIIPKCVSESESAKPSQKKSKVKINWLKPSTKQPSILSKFCSLGKITTNQRSKGQPKEKEGDVEEDLEKYGSDHTANGGPESPGSSVTPVDSSEAKSGNKGAEQIGFELVEKLFQGQLVLRTRCLECESLTERREDFQDISVPVQEDELSKVEESSEISPEPKTEMKTLRWAISQFASVERIVGEDKYFCENCHHYTEAERSLLFDKMPEVITIHLKCFAASGLEFDCYGGGLSKINTPLLTPLKLSLEEWSTKPTNDSYGLFAVVMHSGITISSGHYTASVKVTDLNSLELDEGNFVVDQMCELGKPEPLTEEQARGTAGNYDDEVSIRVGGNAQPSKVLNKKNVEGIGLLGGQKSKADYELYNKASNPDKVVGTPFTDNRNSETNDTTNGTHESDRNKESSDQTGVNMNGLENKISYVVQSLKEYEGKWLLFDDSEVKVTEEKDFLNSLSPSTSPTSTPYLLFYKKL.

Disordered regions lie at residues 1–21 (MPGVIPSESNGLSRGSPSKKN) and 34–56 (KRALDFTDSQENEEKTSEYRGSE). The segment covering 7 to 16 (SESNGLSRGS) has biased composition (polar residues). A phosphoserine mark is found at Ser16 and Ser42. Residues 45 to 56 (NEEKTSEYRGSE) are compositionally biased toward basic and acidic residues. Ser67 is subject to Phosphoserine. The 704-residue stretch at 81 to 784 (VGLNNLGNTC…TPYLLFYKKL (704 aa)) folds into the USP domain. The active-site Nucleophile is the Cys90. Composition is skewed to basic and acidic residues over residues 233 to 243 (VEEQSLQKEET) and 252 to 264 (DSMRNTEDVKEQL). 2 disordered regions span residues 233–342 (VEEQ…INWL) and 362–414 (TTNQ…KSGN). Ser474 is subject to Phosphoserine. His592 (proton acceptor) is an active-site residue. Residues 684-725 (NPDKVVGTPFTDNRNSETNDTTNGTHESDRNKESSDQTGVNM) are disordered. The span at 693–708 (FTDNRNSETNDTTNGT) shows a compositional bias: polar residues. The segment covering 709–718 (HESDRNKESS) has biased composition (basic and acidic residues). The residue at position 767 (Ser767) is a Phosphoserine.

The protein belongs to the peptidase C19 family. As to quaternary structure, interacts with FANCD2 and PCNA. Interacts with WDR48. Interacts with ATAD5; the interaction regulates USP1-mediated PCNA deubiquitination. Post-translationally, autocatalytic cleavage of USP1 following UV irradiation inactivates it, leading to an increase in ubiquitinated PCNA, recruitment of POLH and translesion synthesis. Ubiquitinated by the CRL2(KLHDC2) complex following autocatalytic cleavage, leading to its degradation: the CRL2(KLHDC2) complex recognizes the diglycine (Gly-Gly) at the C-terminus.

It is found in the nucleus. The enzyme catalyses Thiol-dependent hydrolysis of ester, thioester, amide, peptide and isopeptide bonds formed by the C-terminal Gly of ubiquitin (a 76-residue protein attached to proteins as an intracellular targeting signal).. Its function is as follows. Negative regulator of DNA damage repair which specifically deubiquitinates monoubiquitinated FANCD2. Also involved in PCNA-mediated translesion synthesis (TLS) by deubiquitinating monoubiquitinated PCNA. Has almost no deubiquitinating activity by itself and requires the interaction with WDR48 to have a high activity. The polypeptide is Ubiquitin carboxyl-terminal hydrolase 1 (Mus musculus (Mouse)).